We begin with the raw amino-acid sequence, 114 residues long: Class I hydrophobin SC16 (114 aa).

The signal sequence occupies residues 1-17 (MRFFATLVLALPALAMA). Cystine bridges form between cysteine 33/cysteine 93, cysteine 40/cysteine 87, cysteine 41/cysteine 74, and cysteine 94/cysteine 107. The N-linked (GlcNAc...) asparagine glycan is linked to asparagine 42.

It belongs to the fungal hydrophobin family. As to quaternary structure, self-assembles to form functional amyloid fibrils called rodlets. Self-assembly into fibrillar rodlets occurs spontaneously at hydrophobic:hydrophilic interfaces and the rodlets further associate laterally to form amphipathic monolayers.

Its subcellular location is the secreted. It is found in the cell wall. In terms of biological role, aerial growth, conidiation, and dispersal of filamentous fungi in the environment rely upon a capability of their secreting small amphipathic proteins called hydrophobins (HPBs) with low sequence identity. Class I can self-assemble into an outermost layer of rodlet bundles on aerial cell surfaces, conferring cellular hydrophobicity that supports fungal growth, development and dispersal; whereas Class II form highly ordered films at water-air interfaces through intermolecular interactions but contribute nothing to the rodlet structure. The sequence is that of Class I hydrophobin SC16 from Schizophyllum commune (strain H4-8 / FGSC 9210) (Split gill fungus).